The sequence spans 230 residues: Uracil-DNA glycosylase (230 aa).

Catalysis depends on Asp72, which acts as the Proton acceptor.

This sequence belongs to the uracil-DNA glycosylase (UDG) superfamily. UNG family.

The protein localises to the cytoplasm. It carries out the reaction Hydrolyzes single-stranded DNA or mismatched double-stranded DNA and polynucleotides, releasing free uracil.. In terms of biological role, excises uracil residues from the DNA which can arise as a result of misincorporation of dUMP residues by DNA polymerase or due to deamination of cytosine. In Wolinella succinogenes (strain ATCC 29543 / DSM 1740 / CCUG 13145 / JCM 31913 / LMG 7466 / NCTC 11488 / FDC 602W) (Vibrio succinogenes), this protein is Uracil-DNA glycosylase.